The primary structure comprises 157 residues: Crossover junction endodeoxyribonuclease RuvC (157 aa).

Active-site residues include D7, E67, and D140. D7, E67, and D140 together coordinate Mg(2+).

This sequence belongs to the RuvC family. Homodimer which binds Holliday junction (HJ) DNA. The HJ becomes 2-fold symmetrical on binding to RuvC with unstacked arms; it has a different conformation from HJ DNA in complex with RuvA. In the full resolvosome a probable DNA-RuvA(4)-RuvB(12)-RuvC(2) complex forms which resolves the HJ. The cofactor is Mg(2+).

The protein resides in the cytoplasm. It catalyses the reaction Endonucleolytic cleavage at a junction such as a reciprocal single-stranded crossover between two homologous DNA duplexes (Holliday junction).. Its function is as follows. The RuvA-RuvB-RuvC complex processes Holliday junction (HJ) DNA during genetic recombination and DNA repair. Endonuclease that resolves HJ intermediates. Cleaves cruciform DNA by making single-stranded nicks across the HJ at symmetrical positions within the homologous arms, yielding a 5'-phosphate and a 3'-hydroxyl group; requires a central core of homology in the junction. The consensus cleavage sequence is 5'-(A/T)TT(C/G)-3'. Cleavage occurs on the 3'-side of the TT dinucleotide at the point of strand exchange. HJ branch migration catalyzed by RuvA-RuvB allows RuvC to scan DNA until it finds its consensus sequence, where it cleaves and resolves the cruciform DNA. In Thermosipho melanesiensis (strain DSM 12029 / CIP 104789 / BI429), this protein is Crossover junction endodeoxyribonuclease RuvC.